Consider the following 72-residue polypeptide: Large ribosomal subunit protein bL31 (72 aa).

This sequence belongs to the bacterial ribosomal protein bL31 family. Type A subfamily. As to quaternary structure, part of the 50S ribosomal subunit.

Its function is as follows. Binds the 23S rRNA. In Maricaulis maris (strain MCS10) (Caulobacter maris), this protein is Large ribosomal subunit protein bL31.